A 206-amino-acid chain; its full sequence is Small ribosomal subunit protein uS4 (206 aa).

The region spanning 96–159 is the S4 RNA-binding domain; sequence SRLDNVVYRM…KKQARIVEGL (64 aa).

It belongs to the universal ribosomal protein uS4 family. As to quaternary structure, part of the 30S ribosomal subunit. Contacts protein S5. The interaction surface between S4 and S5 is involved in control of translational fidelity.

Functionally, one of the primary rRNA binding proteins, it binds directly to 16S rRNA where it nucleates assembly of the body of the 30S subunit. With S5 and S12 plays an important role in translational accuracy. The chain is Small ribosomal subunit protein uS4 from Chromobacterium violaceum (strain ATCC 12472 / DSM 30191 / JCM 1249 / CCUG 213 / NBRC 12614 / NCIMB 9131 / NCTC 9757 / MK).